The following is a 553-amino-acid chain: Imidazole glycerol phosphate synthase hisHF (553 aa).

In terms of domain architecture, Glutamine amidotransferase type-1 spans 3–223 (TVHLLDYVAG…QLHSVTLEDS (221 aa)). Residues cysteine 81, histidine 194, and glutamate 196 each act as for GATase activity in the active site. The segment at 232 to 553 (LTRRIIACLD…FLVRRFEPDV (322 aa)) is cyclase. Catalysis depends on residues aspartate 241 and aspartate 403.

The protein in the C-terminal section; belongs to the HisA/HisF family.

The catalysed reaction is 5-[(5-phospho-1-deoxy-D-ribulos-1-ylimino)methylamino]-1-(5-phospho-beta-D-ribosyl)imidazole-4-carboxamide + L-glutamine = D-erythro-1-(imidazol-4-yl)glycerol 3-phosphate + 5-amino-1-(5-phospho-beta-D-ribosyl)imidazole-4-carboxamide + L-glutamate + H(+). It catalyses the reaction L-glutamine + H2O = L-glutamate + NH4(+). It functions in the pathway amino-acid biosynthesis; L-histidine biosynthesis; L-histidine from 5-phospho-alpha-D-ribose 1-diphosphate: step 5/9. In terms of biological role, IGPS catalyzes the conversion of PRFAR and glutamine to IGP, AICAR and glutamate. The glutaminase domain produces the ammonia necessary for the cyclase domain to produce IGP and AICAR from PRFAR. The ammonia is channeled to the active site of the cyclase domain. The polypeptide is Imidazole glycerol phosphate synthase hisHF (hisHF) (Emericella nidulans (strain FGSC A4 / ATCC 38163 / CBS 112.46 / NRRL 194 / M139) (Aspergillus nidulans)).